Reading from the N-terminus, the 460-residue chain is Serine--tRNA ligase (460 aa).

Thr242–Glu244 serves as a coordination point for L-serine. ATP contacts are provided by residues Arg273–Glu275 and Val289. Glu296 provides a ligand contact to L-serine. Residue Glu369–Ser372 coordinates ATP. Ser405 is an L-serine binding site.

Belongs to the class-II aminoacyl-tRNA synthetase family. Type-1 seryl-tRNA synthetase subfamily. In terms of assembly, homodimer. The tRNA molecule binds across the dimer.

The protein resides in the cytoplasm. It catalyses the reaction tRNA(Ser) + L-serine + ATP = L-seryl-tRNA(Ser) + AMP + diphosphate + H(+). The catalysed reaction is tRNA(Sec) + L-serine + ATP = L-seryl-tRNA(Sec) + AMP + diphosphate + H(+). It functions in the pathway aminoacyl-tRNA biosynthesis; selenocysteinyl-tRNA(Sec) biosynthesis; L-seryl-tRNA(Sec) from L-serine and tRNA(Sec): step 1/1. Functionally, catalyzes the attachment of serine to tRNA(Ser). Is also able to aminoacylate tRNA(Sec) with serine, to form the misacylated tRNA L-seryl-tRNA(Sec), which will be further converted into selenocysteinyl-tRNA(Sec). The chain is Serine--tRNA ligase from Haloquadratum walsbyi (strain DSM 16790 / HBSQ001).